The following is a 219-amino-acid chain: Type-5 uracil-DNA glycosylase (219 aa).

[4Fe-4S] cluster is bound by residues Cys-13, Cys-16, Cys-115, and Cys-130.

This sequence belongs to the uracil-DNA glycosylase (UDG) superfamily. Type 5 (UDGb) family.

Its function is as follows. DNA glycosylase with broad substrate specificity. Can remove uracil from double-stranded DNA containing either a U/G, U/A, U/C or U/T base pair. Can also excise hypoxanthine from double-stranded DNA containing G/I, T/I, and A/I base pairs, xanthine from both double-stranded and single stranded DNA, thymine from G/T mismatched DNA, 5'-hydroxymethyluracil and 5'-fluorouracil. The polypeptide is Type-5 uracil-DNA glycosylase (Thermus thermophilus (strain ATCC 27634 / DSM 579 / HB8)).